The chain runs to 675 residues: Methionine--tRNA ligase (675 aa).

The 'HIGH' region signature appears at 15–25; it reads PYANGSIHLGH. Residues Cys146, Cys149, Cys159, and Cys162 each contribute to the Zn(2+) site. Positions 332–336 match the 'KMSKS' region motif; that stretch reads KMSKS. Position 335 (Lys335) interacts with ATP. A tRNA-binding domain is found at 573 to 675; it reads DFAKVDMRIA…SGAQPGMQVK (103 aa).

This sequence belongs to the class-I aminoacyl-tRNA synthetase family. MetG type 1 subfamily. As to quaternary structure, homodimer. Requires Zn(2+) as cofactor.

The protein resides in the cytoplasm. It catalyses the reaction tRNA(Met) + L-methionine + ATP = L-methionyl-tRNA(Met) + AMP + diphosphate. Is required not only for elongation of protein synthesis but also for the initiation of all mRNA translation through initiator tRNA(fMet) aminoacylation. This chain is Methionine--tRNA ligase, found in Yersinia pestis bv. Antiqua (strain Angola).